Reading from the N-terminus, the 221-residue chain is Kinetochore protein Spc25 (221 aa).

Residues 63–114 (VIQRREEMEKRVSFMEELAQEVEATKQRNLVMREQIKQQKMLVRQRKNEIME) adopt a coiled-coil conformation.

Belongs to the SPC25 family. In terms of assembly, component of the Ndc80 complex, which is composed of Ndc80, Nuf2 and Spc25.

It is found in the nucleus. It localises to the chromosome. The protein localises to the centromere. Its subcellular location is the kinetochore. Acts as a component of the essential kinetochore-associated Ndc80 complex, which is required for chromosome segregation and spindle checkpoint activity during meiosis and mitosis. Required for kinetochore integrity and the organization of stable microtubule binding sites in the outer plate of the kinetochore. Participates in SAC signaling that responds specifically to disruptions in spindle microtubule dynamics. The NDC80 complex synergistically enhances the affinity of the SKA1 complex for microtubules and may allow the NDC80 complex to track depolymerizing microtubules. This is Kinetochore protein Spc25 from Drosophila eugracilis (Fruit fly).